A 352-amino-acid polypeptide reads, in one-letter code: DNA integrity scanning protein DisA (352 aa).

One can recognise a DAC domain in the interval 3–143 (PQELIEKIKL…NYKYVVNQVD (141 aa)). Residues Gly71, Leu89, and 102–106 (TRHRT) each bind ATP.

Belongs to the DisA family. In terms of assembly, homooctamer. Mg(2+) is required as a cofactor.

It carries out the reaction 2 ATP = 3',3'-c-di-AMP + 2 diphosphate. Participates in a DNA-damage check-point. DisA forms globular foci that rapidly scan along the chromosomes searching for lesions. Functionally, also has diadenylate cyclase activity, catalyzing the condensation of 2 ATP molecules into cyclic di-AMP (c-di-AMP). c-di-AMP likely acts as a signaling molecule that may couple DNA integrity with a cellular process. The polypeptide is DNA integrity scanning protein DisA (Thermotoga neapolitana (strain ATCC 49049 / DSM 4359 / NBRC 107923 / NS-E)).